A 457-amino-acid polypeptide reads, in one-letter code: UDP-N-acetylmuramate--L-alanine ligase (457 aa).

109–115 (GTDGKTT) serves as a coordination point for ATP.

Belongs to the MurCDEF family.

Its subcellular location is the cytoplasm. It carries out the reaction UDP-N-acetyl-alpha-D-muramate + L-alanine + ATP = UDP-N-acetyl-alpha-D-muramoyl-L-alanine + ADP + phosphate + H(+). Its pathway is cell wall biogenesis; peptidoglycan biosynthesis. Cell wall formation. The polypeptide is UDP-N-acetylmuramate--L-alanine ligase (Thermotoga neapolitana (strain ATCC 49049 / DSM 4359 / NBRC 107923 / NS-E)).